A 118-amino-acid polypeptide reads, in one-letter code: NLYQFKNMIHCTVPSRPWWHFADYGCYCGRGGKGTPVDDLDRCCQVHDNCYEKAGKMGCWPYLTLYKYKCSQGKLTCSGGNSKCGAAVCNCDLVAANCFAGARYIDANYNINFKKRCQ.

7 cysteine pairs are disulfide-bonded: C11–C70, C26–C117, C28–C44, C43–C98, C50–C91, C59–C84, and C77–C89. Y27, G29, and G31 together coordinate Ca(2+). The active site involves H47. D48 provides a ligand contact to Ca(2+). Positions E52 to K69 match the Coagulation factor Xa binding motif motif. D92 is an active-site residue.

Belongs to the phospholipase A2 family. Group I subfamily. D49 sub-subfamily. Ca(2+) serves as cofactor. Expressed by the venom gland.

It is found in the secreted. It carries out the reaction a 1,2-diacyl-sn-glycero-3-phosphocholine + H2O = a 1-acyl-sn-glycero-3-phosphocholine + a fatty acid + H(+). Snake venom phospholipase A2 (PLA2) that shows strong anticoagulant activity. Binds directly with the coagulation factor FXa (F10) and blocks the formation of the prothombinase complex. Acts by a nonenzymatic mechanism. Also inhibits the complex composed of tissue factor (F3) and coagulation factor VIIa (F7) (TF-VIIa complex) by both enzymatic and nonenzymatic mechanisms. PLA2 catalyzes the calcium-dependent hydrolysis of the 2-acyl groups in 3-sn-phosphoglycerides. The polypeptide is Phospholipase A2 'basic' (Naja nigricollis (Black-necked spitting cobra)).